A 266-amino-acid chain; its full sequence is MKEMKVIIAGPRGRMGHEAVLLMERTEHFNLVAAVDYKHGGEKISDLPGMPALDAPIYADLHTCLEEVEADVLLDLTTPEVGKQHVTLAVERGLRSVIGTTGFTEEELKQLTETAKEKAVGTIIAPNFAIGAVLMMKFSQMAAKYFQDVEVIELHHDQKLDAPSGTAVKTVELIRQNRESKQQGHPNEVEQLEGARGANVDGIHIHSVRLPGLIAHQEVMFGGDGQMLTVRHDSFNRASFMSGVKLSIETVMNLDHLVYGLENIID.

An NAD(+)-binding site is contributed by 10-15 (GPRGRM). Residue Lys38 coordinates NADP(+). NAD(+)-binding positions include 99-101 (GTT) and 125-128 (APNF). His155 functions as the Proton donor/acceptor in the catalytic mechanism. His156 serves as a coordination point for (S)-2,3,4,5-tetrahydrodipicolinate. Catalysis depends on Lys159, which acts as the Proton donor. Position 165–166 (165–166 (GT)) interacts with (S)-2,3,4,5-tetrahydrodipicolinate.

This sequence belongs to the DapB family.

The protein resides in the cytoplasm. The catalysed reaction is (S)-2,3,4,5-tetrahydrodipicolinate + NAD(+) + H2O = (2S,4S)-4-hydroxy-2,3,4,5-tetrahydrodipicolinate + NADH + H(+). The enzyme catalyses (S)-2,3,4,5-tetrahydrodipicolinate + NADP(+) + H2O = (2S,4S)-4-hydroxy-2,3,4,5-tetrahydrodipicolinate + NADPH + H(+). It participates in amino-acid biosynthesis; L-lysine biosynthesis via DAP pathway; (S)-tetrahydrodipicolinate from L-aspartate: step 4/4. In terms of biological role, catalyzes the conversion of 4-hydroxy-tetrahydrodipicolinate (HTPA) to tetrahydrodipicolinate. This is 4-hydroxy-tetrahydrodipicolinate reductase from Bacillus thuringiensis subsp. konkukian (strain 97-27).